The following is a 135-amino-acid chain: Large ribosomal subunit protein uL16c (135 aa).

This sequence belongs to the universal ribosomal protein uL16 family. As to quaternary structure, part of the 50S ribosomal subunit.

The protein resides in the plastid. It is found in the chloroplast. The chain is Large ribosomal subunit protein uL16c from Olimarabidopsis pumila (Dwarf rocket).